A 188-amino-acid polypeptide reads, in one-letter code: Elongation factor P (188 aa).

Position 34 is an N6-(3,6-diaminohexanoyl)-5-hydroxylysine (Lys34).

Belongs to the elongation factor P family. May be beta-lysylated on the epsilon-amino group of Lys-34 by the combined action of EpmA and EpmB, and then hydroxylated on the C5 position of the same residue by EpmC (if this protein is present). Lysylation is critical for the stimulatory effect of EF-P on peptide-bond formation. The lysylation moiety may extend toward the peptidyltransferase center and stabilize the terminal 3-CCA end of the tRNA. Hydroxylation of the C5 position on Lys-34 may allow additional potential stabilizing hydrogen-bond interactions with the P-tRNA.

It localises to the cytoplasm. It participates in protein biosynthesis; polypeptide chain elongation. In terms of biological role, involved in peptide bond synthesis. Alleviates ribosome stalling that occurs when 3 or more consecutive Pro residues or the sequence PPG is present in a protein, possibly by augmenting the peptidyl transferase activity of the ribosome. Modification of Lys-34 is required for alleviation. The protein is Elongation factor P of Photobacterium profundum (strain SS9).